We begin with the raw amino-acid sequence, 314 residues long: DNA-directed RNA polymerase subunit alpha (314 aa).

The segment at 1-228 is alpha N-terminal domain (alpha-NTD); sequence MIEIEKPRIE…EHLNIFVDLT (228 aa). The tract at residues 245–314 is alpha C-terminal domain (alpha-CTD); it reads KEKVLEMSIE…DLGLGLRKED (70 aa).

The protein belongs to the RNA polymerase alpha chain family. As to quaternary structure, homodimer. The RNAP catalytic core consists of 2 alpha, 1 beta, 1 beta' and 1 omega subunit. When a sigma factor is associated with the core the holoenzyme is formed, which can initiate transcription.

The enzyme catalyses RNA(n) + a ribonucleoside 5'-triphosphate = RNA(n+1) + diphosphate. DNA-dependent RNA polymerase catalyzes the transcription of DNA into RNA using the four ribonucleoside triphosphates as substrates. The protein is DNA-directed RNA polymerase subunit alpha of Macrococcus caseolyticus (strain JCSC5402) (Macrococcoides caseolyticum).